We begin with the raw amino-acid sequence, 255 residues long: Geranylgeranylglyceryl phosphate synthase (255 aa).

The Mg(2+) site is built by D34 and T64. Sn-glycerol 1-phosphate is bound by residues 182-188, 213-214, and 235-236; these read YLEAGSG, GG, and GN.

The protein belongs to the GGGP/HepGP synthase family. Group II subfamily. It depends on Mg(2+) as a cofactor.

The protein localises to the cytoplasm. The catalysed reaction is sn-glycerol 1-phosphate + (2E,6E,10E)-geranylgeranyl diphosphate = sn-3-O-(geranylgeranyl)glycerol 1-phosphate + diphosphate. The protein operates within membrane lipid metabolism; glycerophospholipid metabolism. Functionally, prenyltransferase that catalyzes the transfer of the geranylgeranyl moiety of geranylgeranyl diphosphate (GGPP) to the C3 hydroxyl of sn-glycerol-1-phosphate (G1P). This reaction is the first ether-bond-formation step in the biosynthesis of archaeal membrane lipids. This is Geranylgeranylglyceryl phosphate synthase from Saccharolobus islandicus (strain M.14.25 / Kamchatka #1) (Sulfolobus islandicus).